A 159-amino-acid polypeptide reads, in one-letter code: Transcriptional repressor NrdR (159 aa).

A compositionally biased stretch (polar residues) spans 1 to 11 (MQCPTCQNTDS). The tract at residues 1–21 (MQCPTCQNTDSRVLESRSADS) is disordered. A zinc finger lies at 3–34 (CPTCQNTDSRVLESRSADSGKSVRRRRECLNC). Positions 49–139 (VSVLKKDGGR…VYRKFNGVKD (91 aa)) constitute an ATP-cone domain.

This sequence belongs to the NrdR family. The cofactor is Zn(2+).

In terms of biological role, negatively regulates transcription of bacterial ribonucleotide reductase nrd genes and operons by binding to NrdR-boxes. The sequence is that of Transcriptional repressor NrdR from Prochlorococcus marinus (strain AS9601).